The following is a 599-amino-acid chain: Calmodulin-binding protein 60 E (599 aa).

Residues 1–21 (MNKRGYECSQEDTDKLPESKR) form a disordered region. The interval 1 to 80 (MNKRGYECSQ…LTSRSPEPKR (80 aa)) is calmodulin-binding. A DNA-binding region spans residues 150-273 (EDDEDWTREH…VLHKKLLKAN (124 aa)).

It belongs to the plant ACBP60 protein family. As to quaternary structure, interacts with calmodulin (CaM).

Its subcellular location is the nucleus. In terms of biological role, transcription activator that binds DNA in a sequence-specific manner, likely 5'-GAAATTTTGG-3', to promote the expression of target genes. The sequence is that of Calmodulin-binding protein 60 E from Arabidopsis thaliana (Mouse-ear cress).